A 347-amino-acid polypeptide reads, in one-letter code: Ryncolin-3 (347 aa).

An N-terminal signal peptide occupies residues 1–19 (MKPWAAFHLIFLVASSVEG). Positions 57-114 (GIPGVPGINGSEGLKGDPGPQGLPGETGFDGIPGVAGPKGDKGDQGDKGDKGDKGDKG) constitute a Collagen-like domain. Positions 62-115 (PGINGSEGLKGDPGPQGLPGETGFDGIPGVAGPKGDKGDQGDKGDKGDKGDKGD) are disordered. The span at 95–115 (KGDKGDQGDKGDKGDKGDKGD) shows a compositional bias: basic and acidic residues. The Fibrinogen C-terminal domain maps to 121-341 (DCPPTDVEVR…YADMKIRPQQ (221 aa)). Cystine bridges form between Cys132–Cys160 and Cys284–Cys297.

This sequence belongs to the ficolin lectin family. Veficolin subfamily. Post-translationally, hydroxylated. Expressed by the venom duct.

It is found in the secreted. Its function is as follows. Initiates complement activation and/or interferes in platelet aggregation and/or blood coagulation. In Cerberus rynchops (Dog-faced water snake), this protein is Ryncolin-3.